An 81-amino-acid polypeptide reads, in one-letter code: Putative defensin-like protein 31 (81 aa).

The first 26 residues, 1 to 26 (MTSSSKCLFFVFLCLAALLTPYLAEA), serve as a signal peptide directing secretion. 3 disulfides stabilise this stretch: cysteine 38/cysteine 58, cysteine 44/cysteine 70, and cysteine 48/cysteine 72.

This sequence belongs to the DEFL family.

It localises to the secreted. This Arabidopsis thaliana (Mouse-ear cress) protein is Putative defensin-like protein 31.